Reading from the N-terminus, the 111-residue chain is Nucleoid-associated protein NMA1657 (111 aa).

This sequence belongs to the YbaB/EbfC family. Homodimer.

The protein resides in the cytoplasm. It is found in the nucleoid. Functionally, binds to DNA and alters its conformation. May be involved in regulation of gene expression, nucleoid organization and DNA protection. This chain is Nucleoid-associated protein NMA1657, found in Neisseria meningitidis serogroup A / serotype 4A (strain DSM 15465 / Z2491).